We begin with the raw amino-acid sequence, 43 residues long: Potassium channel toxin gamma-KTx 4.7 (43 aa).

Disulfide bonds link Cys-5-Cys-23, Cys-11-Cys-34, Cys-20-Cys-39, and Cys-24-Cys-41.

It belongs to the ergtoxin family. Gamma-KTx 4 subfamily. As to expression, expressed by the venom gland.

The protein resides in the secreted. Functionally, reversibly blocks Kv11/ERG potassium channels. In Centruroides limpidus (Mexican scorpion), this protein is Potassium channel toxin gamma-KTx 4.7.